The following is a 222-amino-acid chain: UPF0758 protein YicR (222 aa).

The region spanning 100-222 (PLLSPEMTRE…YVSFAERGWI (123 aa)) is the MPN domain. Positions 171, 173, and 184 each coordinate Zn(2+). The JAMM motif motif lies at 171-184 (HNHPSGCAEPSKAD).

This sequence belongs to the UPF0758 family. YicR subfamily.

The protein is UPF0758 protein YicR of Shigella dysenteriae serotype 1 (strain Sd197).